The chain runs to 1009 residues: Membrane alanyl aminopeptidase (1009 aa).

The N-terminal stretch at 1 to 15 is a signal peptide; sequence MAAIKLLVLSLACAC. Positions 16-52 are cleaved as a propeptide — activation peptide; the sequence is VIAHSPIPPASRTIFLDERLEGGAFENIDAFENIELS. Substrate is bound at residue 338–342; sequence GAMEN. His374 is a Zn(2+) binding site. The active-site Proton acceptor is the Glu375. The Zn(2+) site is built by His378 and Glu397. Asn906 carries an N-linked (GlcNAc...) asparagine glycan. The interval 955–980 is disordered; it reads PSTSTTSTTAAPTTVTQPTITEPSTP. Residue Asp987 is the site of GPI-anchor amidated aspartate attachment. Residues 988-1009 constitute a propeptide, removed in mature form; sequence SAMTSFASLFIISLGAILHLIL.

Belongs to the peptidase M1 family. Zn(2+) serves as cofactor.

It localises to the cell membrane. Functionally, binds to the B.thuringiensis toxin, CryIA(C). The protein is Membrane alanyl aminopeptidase of Heliothis virescens (Tobacco budworm moth).